A 119-amino-acid polypeptide reads, in one-letter code: UPF0231 protein YPTB0717 (119 aa).

Belongs to the UPF0231 family.

This is UPF0231 protein YPTB0717 from Yersinia pseudotuberculosis serotype I (strain IP32953).